The following is a 637-amino-acid chain: 1-deoxy-D-xylulose-5-phosphate synthase (637 aa).

Thiamine diphosphate-binding positions include histidine 73 and 113 to 115; that span reads SHA. Mg(2+) is bound at residue aspartate 144. Residues 145-146, asparagine 174, tyrosine 285, and glutamate 366 each bind thiamine diphosphate; that span reads GA. Asparagine 174 is a binding site for Mg(2+).

Belongs to the transketolase family. DXPS subfamily. Homodimer. It depends on Mg(2+) as a cofactor. The cofactor is thiamine diphosphate.

It carries out the reaction D-glyceraldehyde 3-phosphate + pyruvate + H(+) = 1-deoxy-D-xylulose 5-phosphate + CO2. It functions in the pathway metabolic intermediate biosynthesis; 1-deoxy-D-xylulose 5-phosphate biosynthesis; 1-deoxy-D-xylulose 5-phosphate from D-glyceraldehyde 3-phosphate and pyruvate: step 1/1. Its function is as follows. Catalyzes the acyloin condensation reaction between C atoms 2 and 3 of pyruvate and glyceraldehyde 3-phosphate to yield 1-deoxy-D-xylulose-5-phosphate (DXP). This chain is 1-deoxy-D-xylulose-5-phosphate synthase, found in Streptomyces griseus subsp. griseus (strain JCM 4626 / CBS 651.72 / NBRC 13350 / KCC S-0626 / ISP 5235).